Reading from the N-terminus, the 318-residue chain is Extracellular metalloprotease AO090012001025 (318 aa).

The first 23 residues, 1-23 (MSHFPTLHILILVIANLQIQCFA), serve as a signal peptide directing secretion. Residues N106, N121, and N193 are each glycosylated (N-linked (GlcNAc...) asparagine). H229 is a binding site for Zn(2+). E230 is an active-site residue. Residue H233 coordinates Zn(2+). C268 and C295 are disulfide-bonded.

The protein belongs to the peptidase M43B family.

Its subcellular location is the secreted. Its function is as follows. Secreted metalloproteinase that allows assimilation of proteinaceous substrates. This Aspergillus oryzae (strain ATCC 42149 / RIB 40) (Yellow koji mold) protein is Extracellular metalloprotease AO090012001025.